The chain runs to 390 residues: Prostaglandin E2 receptor EP3 subtype (390 aa).

At 1–53 the chain is on the extracellular side; the sequence is MKETRGYGGDAPFCTRLNHSYTGMWAPERSAEARGNLTRPPGSGEDCGSVSVA. N-linked (GlcNAc...) asparagine glycans are attached at residues asparagine 18 and asparagine 36. The helical transmembrane segment at 54-78 threads the bilayer; it reads FPITMLLTGFVGNALAMLLVSRSYR. At 79–91 the chain is on the cytoplasmic side; the sequence is RRESKRKKSFLLC. A helical membrane pass occupies residues 92 to 112; the sequence is IGWLALTDLVGQLLTTPVVIV. At 113-131 the chain is on the extracellular side; sequence VYLSKQRWEHIDPSGRLCT. The helical transmembrane segment at 132–153 threads the bilayer; the sequence is FFGLTMTVFGLSSLFIASAMAV. The Cytoplasmic portion of the chain corresponds to 154–175; it reads ERALAIRAPHWYASHMKTRATR. The chain crosses the membrane as a helical span at residues 176–197; the sequence is AVLLGVWLAVLAFALLPVLGVG. The Extracellular portion of the chain corresponds to 198–227; sequence QYTVQWPGTWCFISTGRGGNGTSSSHNWGN. A helical membrane pass occupies residues 228–253; the sequence is LFFASAFAFLGLLALTVTFSCNLATI. Over 254–283 the chain is Cytoplasmic; sequence KALVSRCRAKATASQSSAQWGRITTETAIQ. The helical transmembrane segment at 284–307 threads the bilayer; sequence LMGIMCVLSVCWSPLLIMMLKMIF. The Extracellular segment spans residues 308–327; that stretch reads NQTSVEHCKTHTEKQKECNF. The chain crosses the membrane as a helical span at residues 328–349; the sequence is FLIAVRLASLNQILDPWVYLLL. Topologically, residues 350-390 are cytoplasmic; the sequence is RKILLRKFCQIRYHTNNYASSSTSLPCQCSSTLMWSDHLER.

The protein belongs to the G-protein coupled receptor 1 family. In terms of assembly, interacts (via C-terminus) with MKLN1. Detected in kidney. Expressed in small intestine, heart, pancreas, gastric fundic mucosa, mammary artery and pulmonary vessels.

It localises to the cell membrane. Receptor for prostaglandin E2 (PGE2). The activity of this receptor can couple to both the inhibition of adenylate cyclase mediated by G(i) proteins, and to an elevation of intracellular calcium. Required for normal development of fever in response to pyrinogens, including IL1B, prostaglandin E2 and bacterial lipopolysaccharide (LPS). Required for normal potentiation of platelet aggregation by prostaglandin E2, and thus plays a role in the regulation of blood coagulation. Required for increased HCO3(-) secretion in the duodenum in response to mucosal acidification, and thereby contributes to the protection of the mucosa against acid-induced ulceration. Not required for normal kidney function, normal urine volume and osmolality. The protein is Prostaglandin E2 receptor EP3 subtype (PTGER3) of Homo sapiens (Human).